The primary structure comprises 135 residues: Lactoylglutathione lyase (135 aa).

Residues 2-126 enclose the VOC domain; it reads RLLHTMLRVG…DGYKIELIEE (125 aa). Histidine 5 serves as a coordination point for Ni(2+). Arginine 9 serves as a coordination point for substrate. Glutamate 56 contacts Ni(2+). 2 residues coordinate substrate: asparagine 60 and histidine 74. The Ni(2+) site is built by histidine 74 and glutamate 122. Glutamate 122 serves as the catalytic Proton donor/acceptor.

This sequence belongs to the glyoxalase I family. In terms of assembly, homodimer. The cofactor is Ni(2+).

The catalysed reaction is (R)-S-lactoylglutathione = methylglyoxal + glutathione. The protein operates within secondary metabolite metabolism; methylglyoxal degradation; (R)-lactate from methylglyoxal: step 1/2. Catalyzes the conversion of hemimercaptal, formed from methylglyoxal and glutathione, to S-lactoylglutathione. This chain is Lactoylglutathione lyase (gloA), found in Escherichia coli O157:H7.